The chain runs to 220 residues: UPF0502 protein VVA1225 (220 aa).

Belongs to the UPF0502 family.

In Vibrio vulnificus (strain YJ016), this protein is UPF0502 protein VVA1225.